The sequence spans 220 residues: Large ribosomal subunit protein uL1 (220 aa).

This sequence belongs to the universal ribosomal protein uL1 family. As to quaternary structure, part of the 50S ribosomal subunit.

In terms of biological role, binds directly to 23S rRNA. The L1 stalk is quite mobile in the ribosome, and is involved in E site tRNA release. Protein L1 is also a translational repressor protein, it controls the translation of the L11 operon by binding to its mRNA. The protein is Large ribosomal subunit protein uL1 of Ehrlichia ruminantium (strain Gardel).